The primary structure comprises 82 residues: Exodeoxyribonuclease 7 small subunit (82 aa).

The protein belongs to the XseB family. In terms of assembly, heterooligomer composed of large and small subunits.

The protein resides in the cytoplasm. It carries out the reaction Exonucleolytic cleavage in either 5'- to 3'- or 3'- to 5'-direction to yield nucleoside 5'-phosphates.. Its function is as follows. Bidirectionally degrades single-stranded DNA into large acid-insoluble oligonucleotides, which are then degraded further into small acid-soluble oligonucleotides. In Pectobacterium atrosepticum (strain SCRI 1043 / ATCC BAA-672) (Erwinia carotovora subsp. atroseptica), this protein is Exodeoxyribonuclease 7 small subunit.